The chain runs to 675 residues: uncharacterized protein (675 aa).

This is an uncharacterized protein from Homo sapiens (Human).